A 210-amino-acid polypeptide reads, in one-letter code: Cell division protein FtsQ (210 aa).

The POTRA domain maps to Leu-1–Arg-58. A helical membrane pass occupies residues Val-8 to Ile-25.

Belongs to the FtsQ/DivIB family. FtsQ subfamily.

Its subcellular location is the cell inner membrane. In terms of biological role, essential cell division protein. In Rhizobium radiobacter (Agrobacterium tumefaciens), this protein is Cell division protein FtsQ.